The chain runs to 463 residues: Putative WAS protein family homolog 3 (463 aa).

The required for WASH complex assembly stretch occupies residues 1 to 54 (MTPVRMQHSLAGQTYAVPLIQPDLRREEAVQQMADALQYLQKVSGDIFSRISQQ). The tract at residues 1–165 (MTPVRMQHSL…EGLGGLPSNI (165 aa)) is WHD1. K218 participates in a covalent cross-link: Glycyl lysine isopeptide (Lys-Gly) (interchain with G-Cter in ubiquitin). The disordered stretch occupies residues 295–463 (QDGVLTPPPP…AEEDEDDWES (169 aa)). The span at 300-312 (TPPPPPPPPPPAP) shows a compositional bias: pro residues. Positions 347–463 (QGAPREVVDP…AEEDEDDWES (117 aa)) are VCA. Residues 359–381 (GRATLLESIRQAGGIGKAKLRSM) form the WH2 domain. Residues 380–396 (SMKERKLEKKQQKEQEQ) are compositionally biased toward basic and acidic residues. Over residues 422-434 (SGKGPGAGEGPGG) the composition is skewed to gly residues. Over residues 454–463 (AEEDEDDWES) the composition is skewed to acidic residues.

The protein belongs to the WASH1 family. Component of the WASH core complex also described as WASH regulatory complex (SHRC) composed of WASH (WASHC1, WASH2P or WASH3P), WASHC2 (WASHC2A or WASHC2C), WASHC3, WASHC4 and WASHC5. The WASH core complex associates with the F-actin-capping protein dimer (formed by CAPZA1, CAPZA2 or CAPZA3 and CAPZB) in a transient or substoichiometric manner which was initially described as WASH complex. Interacts (via WHD1 region) with WASHC2C; the interaction is direct. Interacts with alpha-tubulin. Interacts with BECN1; WASHC1 and AMBRA1 can competitively interact with BECN1. Interacts with BLOC1S2; may associate with the BLOC-1 complex. Interacts with tubulin gamma chain (TUBG1 or TUBG2). Interacts with EXOC1, EXOC4, EXOC8; in MMP14-positive endosomes in breast tumor cells; indicative for an association with the exocyst complex.

It is found in the early endosome. The protein localises to the early endosome membrane. The protein resides in the recycling endosome membrane. It localises to the cell projection. Its subcellular location is the lamellipodium. It is found in the filopodium. The protein localises to the cytoplasmic vesicle. The protein resides in the autophagosome. It localises to the cytoplasm. Its subcellular location is the cytoskeleton. It is found in the microtubule organizing center. The protein localises to the centrosome. The protein resides in the centriole. Acts as a nucleation-promoting factor at the surface of endosomes, where it recruits and activates the Arp2/3 complex to induce actin polymerization, playing a key role in the fission of tubules that serve as transport intermediates during endosome sorting. Involved in endocytic trafficking of EGF. Involved in transferrin receptor recycling. Regulates the trafficking of endosomal alpha5beta1 integrin to the plasma membrane and involved in invasive cell migration. In T-cells involved in endosome-to-membrane recycling of receptors including T-cell receptor (TCR), CD28 and ITGAL; proposed to be implicated in T cell proliferation and effector function. In dendritic cells involved in endosome-to-membrane recycling of major histocompatibility complex (MHC) class II probably involving retromer and subsequently allowing antigen sampling, loading and presentation during T-cell activation. Involved in Arp2/3 complex-dependent actin assembly driving Salmonella typhimurium invasion independent of ruffling. Involved in the exocytosis of MMP14 leading to matrix remodeling during invasive migration and implicating late endosome-to-plasma membrane tubular connections and cooperation with the exocyst complex. Involved in negative regulation of autophagy independently from its role in endosomal sorting by inhibiting BECN1 ubiquitination to inactivate PIK3C3/Vps34 activity. The chain is Putative WAS protein family homolog 3 (WASH3P) from Homo sapiens (Human).